We begin with the raw amino-acid sequence, 787 residues long: MMLRLSVKKRCMSRTIPRISGLQGSIYSSRNIFVVRSQKGKPTLRKSKGSNDGGAVNNKEKLSEWVDSDFERKMKQQEVEYERRLKELKSLTASVARIIKKKEDIEKLQEIPMPSEVNRDAEKIYGSLEVGKEKLASLPENSPSLSGIEKQPEPFNASNHSLITPAIDMPESITKRLGLAIKFLVSKTNINWTMVLQQLKEGGGFQGLPERDIRMFIYSIPKEQISHLIPVLEQLLEEGNVKKSSKIINVFIAGLSHGGYLSDESIAQIEQYCNHITKINKKGKLSRETYELMIQAYGKNNNLEKINMCLSEMKQNKLEPSQKTFSNILSTCVYKANDHKQAVEIFDSMKFLSQKTKPDTRAYQDIIVSYVNNDNIEKALDLYREMITEKIEINQRIMVALARGCTSRPELRFKAWDFIFDIYNNNWEPTLNTFEYMLYLSAKDGDVALSRAFYSKLNESNAITPRSFSFLLLAYSKSQVSQPGQSIELPPITFHEKGRNFRRNILSDVNLFPASAQNGIPFLPVLDLTSKEEIMAESSAMWAHTLMFNPSFVNTDCANTFLNIAAVMGRLNDFIDRYDSSTFLDRTGLSNDTRIIIEELPDSISSNTDISQTDGESVSSVQSKFDEMSITKSPLLKDVGSNIGLGNRKISRTSLSYVIALKAAARFKNYKFAQRIWSERGTFRKTSNFKDLSRSTKDALDFQFANAMVSCLTKMNLLDDALAILLSTEYQFKWTWKELRELYQAASDIDHSDACKSIRGIAKRAQINYEGKIRRKDFKRYVMERGY.

Residues 1 to 12 (MMLRLSVKKRCM) constitute a mitochondrion transit peptide. The segment covering 38 to 48 (QKGKPTLRKSK) has biased composition (basic residues). Residues 38-58 (QKGKPTLRKSKGSNDGGAVNN) are disordered. PPR repeat units lie at residues 286 to 320 (SRET…KLEP), 321 to 356 (SQKT…SQKT), and 359 to 393 (DTRA…KIEI).

This sequence belongs to the CCM1 family. In terms of assembly, binds to mitochondrial small subunit 15S rRNA.

The protein resides in the mitochondrion. Its function is as follows. Regulates mitochondrial small subunit maturation by controlling 15S rRNA 5'-end processing. Localizes to the 5' precursor of the 15S rRNA in a position that is subsequently occupied by mS47 in the mature yeast mtSSU. Uses structure and sequence-specific RNA recognition, binding to a single-stranded region of the precursor and specifically recognizing bases -6 to -1. The exchange of Ccm1 for mS47 is coupled to the irreversible removal of precursor rRNA that is accompanied by conformational changes of the mitoribosomal proteins uS5m and mS26. These conformational changes signal completion of 5'-end rRNA processing through protection of the mature 5'-end of the 15S rRNA and stabilization of mS47. The removal of the 5' precursor together with the dissociation of Ccm1 may be catalyzed by the 5'-3' exoribonuclease Pet127. Involved in the specific removal of group I introns in mitochondrial encoded transcripts. This Debaryomyces hansenii (strain ATCC 36239 / CBS 767 / BCRC 21394 / JCM 1990 / NBRC 0083 / IGC 2968) (Yeast) protein is Mitochondrial 15S rRNA processing factor CCM1 (CCM1).